The following is a 232-amino-acid chain: tRNA (guanine-N(1)-)-methyltransferase (232 aa).

S-adenosyl-L-methionine is bound by residues Gly-108 and 128–133 (IGDFIM).

It belongs to the RNA methyltransferase TrmD family. In terms of assembly, homodimer.

The protein localises to the cytoplasm. It carries out the reaction guanosine(37) in tRNA + S-adenosyl-L-methionine = N(1)-methylguanosine(37) in tRNA + S-adenosyl-L-homocysteine + H(+). Its function is as follows. Specifically methylates guanosine-37 in various tRNAs. The sequence is that of tRNA (guanine-N(1)-)-methyltransferase from Campylobacter fetus subsp. fetus (strain 82-40).